The following is a 442-amino-acid chain: Urokinase-type plasminogen activator (442 aa).

Residues 1–20 (MRVLRACLSLCVLVVSDSKG) form the signal peptide. The EGF-like domain maps to 29–65 (GASNCGCLNGGKCVSYKYFSNIQRCSCPKKFQGEHCE). 12 disulfide bridges follow: Cys33-Cys41, Cys35-Cys53, Cys55-Cys64, Cys72-Cys153, Cys93-Cys135, Cys124-Cys148, Cys179-Cys310, Cys220-Cys236, Cys228-Cys299, Cys324-Cys393, Cys356-Cys372, and Cys383-Cys411. Positions 36–59 (LNGGKCVSYKYFSNIQRCSCPKKF) are binds urokinase plasminogen activator surface receptor. Residues 72-153 (CFEGNGHSYR…LVQECMVPNC (82 aa)) form the Kringle domain. N-linked (GlcNAc...) asparagine glycosylation occurs at Asn152. A connecting peptide region spans residues 154-189 (SGGESHRPAYDGKNPFSTPEKVEFQCGQKALRPRFK). In terms of domain architecture, Peptidase S1 spans 190 to 435 (IVGGKSTTIE…FLTWIHTHVG (246 aa)). Catalysis depends on charge relay system residues His235 and Asp286. Ser387 functions as the Charge relay system in the catalytic mechanism.

This sequence belongs to the peptidase S1 family. Found in high and low molecular mass forms. Each consists of two chains, A and B. The high molecular mass form contains a long chain A which is cleaved to yield a short chain A. Forms heterodimer with SERPINA5. Binds LRP1B; binding is followed by internalization and degradation. Interacts with MRC2. Interacts with PLAUR. In complex with SERPINE1, interacts with PLAUR/uPAR. Interacts with SORL1 and LRP1, either alone or in complex with SERPINE1; these interactions are abolished in the presence of LRPAP1/RAP. The ternary complex composed of PLAUR-PLAU-PAI1 also interacts with SORLA. Post-translationally, produced as an inactive single-chain protein (pro-uPA or sc-uPA), is processed into the active disulfide-linked two-chain form of PLAU/uPA by a proteolytic event mediated, at least, by TMPRSS4.

The protein resides in the secreted. It catalyses the reaction Specific cleavage of Arg-|-Val bond in plasminogen to form plasmin.. Inhibited by SERPINA5. Inhibited by SERPINE1. In terms of biological role, specifically cleaves the zymogen plasminogen to form the active enzyme plasmin. This is Urokinase-type plasminogen activator (PLAU) from Sus scrofa (Pig).